We begin with the raw amino-acid sequence, 517 residues long: T-box transcription factor TBX22 (517 aa).

Positions 1 to 83 (MALSSRAHAF…SDESNSQESL (83 aa)) are disordered. Residues 35–45 (LQEEQFVEEGE) show a composition bias toward acidic residues. Basic and acidic residues predominate over residues 46–66 (EILRSPSRDSQQPEKRLKAES). Residues 74–83 (SDESNSQESL) are compositionally biased toward low complexity. A DNA-binding region (T-box) is located at residues 93–280 (LQGSDLWKRF…RNPFAKGFRD (188 aa)). The interval 312 to 333 (TQSGSSGSSPVTSSGGAPSPLN) is disordered. Residues 314 to 333 (SGSSGSSPVTSSGGAPSPLN) are compositionally biased toward low complexity.

It localises to the nucleus. Functionally, probable transcriptional regulator involved in developmental processes. This is major determinant crucial to palatogenesis. In Mus musculus (Mouse), this protein is T-box transcription factor TBX22 (Tbx22).